The following is a 415-amino-acid chain: Corticotropin-releasing factor receptor 1 (415 aa).

Residues 1 to 23 (MARHPQLRLVKALLLLGLNPVSA) form the signal peptide. At 24 to 111 (SLQDQHCESL…CQEILNEEKK (88 aa)) the chain is on the extracellular side. Disulfide bonds link Cys30-Cys54, Cys44-Cys87, and Cys68-Cys102. N-linked (GlcNAc...) asparagine glycans are attached at residues Asn38, Asn78, and Asn98. The segment at 99-108 (YSECQEILNE) is important for peptide agonist binding. A helical membrane pass occupies residues 112 to 142 (SKVHYHVAVIINYLGHCISLVALLVAFVLFL). Residues 143–149 (RLRSIRC) lie on the Cytoplasmic side of the membrane. Residues 150-174 (LRNIIHWNLISAFILRNATWFVVQL) form a helical membrane-spanning segment. Residues 175–189 (TMSPEVHQSNVGWCR) are Extracellular-facing. A disulfide bridge connects residues Cys188 and Cys258. A helical membrane pass occupies residues 190–218 (LVTAAYNYFHVTNFFWMFGEGCYLHTAIV). The Cytoplasmic segment spans residues 219-225 (LTYSTDR). Residues 226-253 (LRKWMFICIGWGVPFPIIVAWAIGKLYY) traverse the membrane as a helical segment. The Extracellular segment spans residues 254-269 (DNEKCWFGKRPGVYTD). The helical transmembrane segment at 270–295 (YIYQGPMILVLLINFIFLFNIVRILM) threads the bilayer. Residues 280–290 (LLINFIFLFNI) form an important for antagonist binding region. Topologically, residues 296–306 (TKLRASTTSET) are cytoplasmic. Residue Ser301 is modified to Phosphoserine; by PKA. A helical membrane pass occupies residues 307-331 (IQYRKAVKATLVLLPLLGITYMLFF). The Extracellular portion of the chain corresponds to 332-338 (VNPGEDE). A helical transmembrane segment spans residues 339–368 (VSRVVFIYFNSFLESFQGFFVSVFYCFLNS). Over 369 to 415 (EVRSAIRKRWHRWQDKHSIRARVARAMSIPTSPTRVSFHSIKQSTAV) the chain is Cytoplasmic.

Belongs to the G-protein coupled receptor 2 family. In terms of assembly, heterodimer; heterodimerizes with GPER1. Interacts (via N-terminal extracellular domain) with CRH and UCN. Interacts with DLG1; this inhibits endocytosis of CRHR1 after agonist binding. In terms of processing, C-terminal Ser or Thr residues may be phosphorylated. Post-translationally, phosphorylation at Ser-301 by PKA prevents maximal coupling to Gq-protein, and thereby negatively regulates downstream signaling. As to expression, expressed abundantly in the pituitary, cerebral cortex, hippocampus, amygdala and cerebellum.

It localises to the cell membrane. Its subcellular location is the endosome. Its function is as follows. G-protein coupled receptor for CRH (corticotropin-releasing factor) and UCN (urocortin). Has high affinity for CRH and UCN. Ligand binding causes a conformation change that triggers signaling via guanine nucleotide-binding proteins (G proteins) and down-stream effectors, such as adenylate cyclase. Promotes the activation of adenylate cyclase, leading to increased intracellular cAMP levels. Inhibits the activity of the calcium channel CACNA1H. Required for normal embryonic development of the adrenal gland and for normal hormonal responses to stress. Plays a role in the response to anxiogenic stimuli. This chain is Corticotropin-releasing factor receptor 1 (CRHR1), found in Macaca mulatta (Rhesus macaque).